Reading from the N-terminus, the 456-residue chain is B-cell linker protein (456 aa).

Residues I36–K301 form a disordered region. Residues P57–N74 show a composition bias toward acidic residues. Y72, Y84, Y96, Y178, and Y189 each carry phosphotyrosine; by SYK. Residues E173 to E187 are compositionally biased toward acidic residues. Over residues P212 to G226 the composition is skewed to low complexity. Pro residues predominate over residues S236–L245. Low complexity predominate over residues K251–P260. Residues C271–E289 show a composition bias toward basic and acidic residues. Positions W346–V453 constitute an SH2 domain.

Associates with PLCG1, VAV1 and NCK1 in a B-cell antigen receptor-dependent fashion. Interacts with VAV3, PLCG2 and GRB2. Interacts through its SH2 domain with CD79A. Interacts (via SH2 domain) with SYK; phosphorylated and activated by SYK. Interacts (via SH2 domain) with SCIMP; this interaction is dependent on phosphorylation of SCIMP 'Tyr-131'. In terms of processing, following BCR activation, phosphorylated on tyrosine residues by SYK and LYN. When phosphorylated, serves as a scaffold to assemble downstream targets of antigen activation, including PLCG1, VAV1, GRB2 and NCK1. Phosphorylation of Tyr-84, Tyr-178 and Tyr-189 facilitates PLCG1 binding. Phosphorylation of Tyr-96 facilitates BTK binding. Phosphorylation of Tyr-72 facilitates VAV1 and NCK1 binding. Phosphorylation is required for both Ca(2+) and MAPK signaling pathways. As to expression, expressed in B-cell lineage and fibroblast cell lines (at protein level). Highest levels of expression in the spleen, with lower levels in the liver, kidney, pancreas, small intestines and colon.

It is found in the cytoplasm. The protein resides in the cell membrane. In terms of biological role, functions as a central linker protein, downstream of the B-cell receptor (BCR), bridging the SYK kinase to a multitude of signaling pathways and regulating biological outcomes of B-cell function and development. Plays a role in the activation of ERK/EPHB2, MAP kinase p38 and JNK. Modulates AP1 activation. Important for the activation of NF-kappa-B and NFAT. Plays an important role in BCR-mediated PLCG1 and PLCG2 activation and Ca(2+) mobilization and is required for trafficking of the BCR to late endosomes. However, does not seem to be required for pre-BCR-mediated activation of MAP kinase and phosphatidyl-inositol 3 (PI3) kinase signaling. May be required for the RAC1-JNK pathway. Plays a critical role in orchestrating the pro-B cell to pre-B cell transition. May play an important role in BCR-induced B-cell apoptosis. This is B-cell linker protein (BLNK) from Homo sapiens (Human).